We begin with the raw amino-acid sequence, 1738 residues long: MLKRKQSSRVEAQPVTDFGPDESLSDNADILWINKPWVHSLLRICAIISVIPVCMNTPMTFEHYPPLQYVTFTLDTLLMFLYTAEMIAKMHIRGIVKGDSSYVKDRWCVFDGFMVFCLWVSLVLQVFEIADIVDQMSPWGMLRIPRPLIMIRAFRIYFRFELPRTRITNILKRSGEQIWSVSIFLLFFLLLYGILGVQMFGTFTYHCVVNDTKPGNVTWNSLAIPDTHCSPELEEGYQCPPGFKCMDLEDLGLSRQELGYSGFNEIGTSIFTVYEASSQEGWVFLMYRAIDSFPRWRSYFYFITLIFFLAWLVKNVFIAVIIETFAEIRVQFQQMWGTRSSTTSTATTQMFHEDAAGGWQLVAVDVNKPQGRAPACLQKMMRSSVFHMFILSMVTVDVIVAASNYYKGENFRRQYDEFYLAEVAFTVLFDLEALLKIWCLGFTGYISSSLHKFELLLVIGTTLHVYPDLYHSQFTYFQVLRVVRLIKISPALEDFVYKIFGPGKKLGSLVVFTASLLIVMSAISLQMFCFVEELDRFTTFPRAFMSMFQILTQEGWVDVMDQTLNAVGHMWAPLVAIYFILYHLFATLILLSLFVAVILDNLELDEDLKKLKQLKQSEANADTKEKLPLRLRIFEKFPNRPQMVKISKLPSDFTVPKIRESFMKQFIDRQQQDTCCLFRILPSTSSSSCDNPKRPTVEDNKYIDQKLRKSVFSIRARNLLEKETAVTKILRACTRQRMLSGSFEGQPTKERSILSVQHHIRQERRSLRHGSNSQRISRGKSLETLTQDHSNTVRYRNAQREDSEIKMIQEKKEQAEMKRKVQEEELRENHPYFDKPLFIVGREHRFRNFCRVVVRARFNASKTDPVTGAVKNTKYHQLYDLLGLVTYLDWVMITVTICSCISMMFESPFRRVMHAPTLQIAEYVFVIFMSIELNLKIMADGLFFTPTAVIRDFGGVMDIFIYLVSLIFLCWMPQNVPAESGAQLLMVLRCLRPLRIFKLVPQMRKVVRELFSGFKEIFLVSILLLTLMLVFASFGVQLFAGKLAKCNDPNIIRREDCNGIFRINVSVSKNLNLKLRPGEKKPGFWVPRVWANPRNFNFDNVGNAMLALFEVLSLKGWVEVRDVIIHRVGPIHGIYIHVFVFLGCMIGLTLFVGVVIANFNENKGTALLTVDQRRWEDLKSRLKIAQPLHLPPRPDNDGFRAKMYDITQHPFFKRTIALLVLAQSVLLSVKWDVEDPVTVPLATMSVVFTFIFVLEVTMKIIAMSPAGFWQSRRNRYDLLVTSLGVVWVVLHFALLNAYTYMMGACVIVFRFFSICGKHVTLKMLLLTVVVSMYKSFFIIVGMFLLLLCYAFAGVVLFGTVKYGENINRHANFSSAGKAITVLFRIVTGEDWNKIMHDCMVQPPFCTPDEFTYWATDCGNYAGALMYFCSFYVIIAYIMLNLLVAIIVENFSLFYSTEEDQLLSYNDLRHFQIIWNMVDDKREGVIPTFRVKFLLRLLRGRLEVDLDKDKLLFKHMCYEMERLHNGGDVTFHDVLSMLSYRSVDIRKSLQLEELLAREQLEYTIEEEVAKQTIRMWLKKCLKRIRAKQQQSCSIIHSLRESQQQELSRFLNPPSIETTQPSEDTNANSQDHNTQPESSSQQQLLSPTLSDRGGSRQDAADTGKPQRKIGQWRLPSAPKPISHSVSSVNLRFGGRTTMKSVVCKMNPMPDTASCGSEVKKWWTRQLTVESDESGDDLLDI.

The Cytoplasmic segment spans residues 1-36; sequence MLKRKQSSRVEAQPVTDFGPDESLSDNADILWINKP. Residues 37-57 traverse the membrane as a helical segment; the sequence is WVHSLLRICAIISVIPVCMNT. At 58–65 the chain is on the extracellular side; that stretch reads PMTFEHYP. Residues 66-90 traverse the membrane as a helical segment; sequence PLQYVTFTLDTLLMFLYTAEMIAKM. The Cytoplasmic segment spans residues 91 to 106; the sequence is HIRGIVKGDSSYVKDR. A helical membrane pass occupies residues 107-129; sequence WCVFDGFMVFCLWVSLVLQVFEI. At 130–137 the chain is on the extracellular side; that stretch reads ADIVDQMS. The chain crosses the membrane as a helical; Voltage-sensor span at residues 138–158; sequence PWGMLRIPRPLIMIRAFRIYF. The Cytoplasmic portion of the chain corresponds to 159 to 173; it reads RFELPRTRITNILKR. A helical transmembrane segment spans residues 174–199; that stretch reads SGEQIWSVSIFLLFFLLLYGILGVQM. The Extracellular segment spans residues 200 to 269; the sequence is FGTFTYHCVV…YSGFNEIGTS (70 aa). 2 cysteine pairs are disulfide-bonded: C207-C239 and C229-C245. N210 and N216 each carry an N-linked (GlcNAc...) asparagine glycan. The pore-forming intramembrane region spans 270-289; that stretch reads IFTVYEASSQEGWVFLMYRA. Residues 290 to 294 lie on the Extracellular side of the membrane; that stretch reads IDSFP. Residues 295-322 form a helical membrane-spanning segment; that stretch reads RWRSYFYFITLIFFLAWLVKNVFIAVII. Residues 323 to 382 lie on the Cytoplasmic side of the membrane; it reads ETFAEIRVQFQQMWGTRSSTTSTATTQMFHEDAAGGWQLVAVDVNKPQGRAPACLQKMMR. A helical transmembrane segment spans residues 383-403; sequence SSVFHMFILSMVTVDVIVAAS. Over 404 to 416 the chain is Extracellular; sequence NYYKGENFRRQYD. Residues 417–439 form a helical membrane-spanning segment; the sequence is EFYLAEVAFTVLFDLEALLKIWC. At 440-447 the chain is on the cytoplasmic side; that stretch reads LGFTGYIS. A helical membrane pass occupies residues 448–468; that stretch reads SSLHKFELLLVIGTTLHVYPD. Residues 469-472 lie on the Extracellular side of the membrane; sequence LYHS. A helical; Voltage-sensor membrane pass occupies residues 473 to 492; sequence QFTYFQVLRVVRLIKISPAL. Over 493-502 the chain is Cytoplasmic; it reads EDFVYKIFGP. Residues 503 to 530 form a helical membrane-spanning segment; sequence GKKLGSLVVFTASLLIVMSAISLQMFCF. Topologically, residues 531–543 are extracellular; it reads VEELDRFTTFPRA. Residues 544–563 constitute an intramembrane region (pore-forming); that stretch reads FMSMFQILTQEGWVDVMDQT. Residues 564–569 are Extracellular-facing; sequence LNAVGH. The chain crosses the membrane as a helical span at residues 570–599; sequence MWAPLVAIYFILYHLFATLILLSLFVAVIL. The Cytoplasmic segment spans residues 600-886; that stretch reads DNLELDEDLK…QLYDLLGLVT (287 aa). The tract at residues 762–789 is disordered; sequence QERRSLRHGSNSQRISRGKSLETLTQDH. A coiled-coil region spans residues 795-830; it reads YRNAQREDSEIKMIQEKKEQAEMKRKVQEEELRENH. The helical transmembrane segment at 887–906 threads the bilayer; that stretch reads YLDWVMITVTICSCISMMFE. Topologically, residues 907-915 are extracellular; the sequence is SPFRRVMHA. A helical membrane pass occupies residues 916–939; sequence PTLQIAEYVFVIFMSIELNLKIMA. At 940-947 the chain is on the cytoplasmic side; that stretch reads DGLFFTPT. Residues 948-972 form a helical membrane-spanning segment; that stretch reads AVIRDFGGVMDIFIYLVSLIFLCWM. At 973–980 the chain is on the extracellular side; the sequence is PQNVPAES. The helical; Voltage-sensor transmembrane segment at 981–1003 threads the bilayer; it reads GAQLLMVLRCLRPLRIFKLVPQM. The Cytoplasmic portion of the chain corresponds to 1004–1015; that stretch reads RKVVRELFSGFK. The helical transmembrane segment at 1016–1039 threads the bilayer; it reads EIFLVSILLLTLMLVFASFGVQLF. At 1040–1104 the chain is on the extracellular side; the sequence is AGKLAKCNDP…NFNFDNVGNA (65 aa). Residues C1046 and C1057 are joined by a disulfide bond. Residue N1064 is glycosylated (N-linked (GlcNAc...) asparagine). Residues 1105 to 1124 constitute an intramembrane region (pore-forming); it reads MLALFEVLSLKGWVEVRDVI. At 1125-1129 the chain is on the extracellular side; the sequence is IHRVG. A helical membrane pass occupies residues 1130–1159; the sequence is PIHGIYIHVFVFLGCMIGLTLFVGVVIANF. The Cytoplasmic portion of the chain corresponds to 1160–1210; it reads NENKGTALLTVDQRRWEDLKSRLKIAQPLHLPPRPDNDGFRAKMYDITQHP. Residues 1211–1227 form a helical membrane-spanning segment; the sequence is FFKRTIALLVLAQSVLL. The Extracellular portion of the chain corresponds to 1228-1236; sequence SVKWDVEDP. The chain crosses the membrane as a helical span at residues 1237–1260; the sequence is VTVPLATMSVVFTFIFVLEVTMKI. Residues 1261 to 1271 are Cytoplasmic-facing; that stretch reads IAMSPAGFWQS. Residues 1272–1293 form a helical membrane-spanning segment; it reads RRNRYDLLVTSLGVVWVVLHFA. The Extracellular segment spans residues 1294–1296; it reads LLN. The helical; Voltage-sensor transmembrane segment at 1297–1318 threads the bilayer; that stretch reads AYTYMMGACVIVFRFFSICGKH. The Cytoplasmic segment spans residues 1319 to 1331; it reads VTLKMLLLTVVVS. The chain crosses the membrane as a helical span at residues 1332–1357; it reads MYKSFFIIVGMFLLLLCYAFAGVVLF. Over 1358–1378 the chain is Extracellular; that stretch reads GTVKYGENINRHANFSSAGKA. The pore-forming intramembrane region spans 1379–1398; it reads ITVLFRIVTGEDWNKIMHDC. Over 1399–1420 the chain is Extracellular; sequence MVQPPFCTPDEFTYWATDCGNY. C1405 and C1417 are disulfide-bonded. A helical membrane pass occupies residues 1421-1447; the sequence is AGALMYFCSFYVIIAYIMLNLLVAIIV. Over 1448–1738 the chain is Cytoplasmic; the sequence is ENFSLFYSTE…DESGDDLLDI (291 aa). Residues 1611–1679 are disordered; sequence PPSIETTQPS…WRLPSAPKPI (69 aa). Residues 1613–1631 are compositionally biased toward polar residues; the sequence is SIETTQPSEDTNANSQDHN. Positions 1633–1648 are enriched in low complexity; sequence QPESSSQQQLLSPTLS.

This sequence belongs to the NALCN family. As to quaternary structure, found in a complex with NALCN, UNC79, UNC80 and NACL1; these auxiliary subunits are indispensable for the function of NALCN channel. Interacts with UNC80; required for the NALCN activation/inhibition by GPCRs in neurons. Found in a complex with NALCN, UNC79 and UNC80; UNC80 bridges NALCN to UNC79. Interacts with CHRM3. Phosphorylated on tyrosine residues. As to expression, predominantly expressed in the brain, moderately in the heart and weakly in the pancreas.

It is found in the cell membrane. The catalysed reaction is Na(+)(in) = Na(+)(out). Inhibited by low micromolar concentrations of Gd(3+) and high micromolar concentrations of verapamil. Insensitive to tetrodotoxin (TTX) and potentiated by low external Ca(2+) concentration. Its function is as follows. Voltage-gated ion channel responsible for the resting Na(+) permeability that controls neuronal excitability. NALCN channel functions as a multi-protein complex, which consists at least of NALCN, NALF1, UNC79 and UNC80. NALCN is the voltage-sensing, pore-forming subunit of the NALCN channel complex. NALCN channel complex is constitutively active and conducts monovalent cations but is blocked by physiological concentrations of extracellular divalent cations. In addition to its role in regulating neuronal excitability, is required for normal respiratory rhythm, systemic osmoregulation by controlling the serum sodium concentration and in the regulation of the intestinal pace-making activity in the interstitial cells of Cajal. NALCN channel is also activated by neuropeptides such as neurotensin and substance P (SP) through a SRC family kinases-dependent pathway. In addition, NALCN activity is enhanced/modulated by several GPCRs, such as CHRM3. In Rattus norvegicus (Rat), this protein is Sodium leak channel NALCN (Nalcn).